Here is a 365-residue protein sequence, read N- to C-terminus: MIKFLSALILLLVTTAAQAERIRDLTSVQGVRQNSLIGYGLVVGLDGTGDQTTQTPFTTQTLNNMLSQLGITVPTGTNMQLKNVAAVMVTASLPPFGRQGQTIDVVVSSMGNAKSLRGGTLLMTPLKGVDSQVYALAQGNILVGGAGASAGGSSVQVNQLNGGRITNGAVIERELPSQFGVGNTLNLQLNDEDFSMAQQIADTINRVRGYGSATALDARTIQVRVPSGNSSQVRFLADIQNMQVNVTPQDAKVVINSRTGSVVMNREVTLDSCAIAQGNLSVTVNRQANVSQPDTPFGGGQTVVTPQTQIDLRQSGGSLQSVRSSASLNNVVRALNALGATPMDLMSILQSMQSAGCLRAKLEII.

Residues 1–19 (MIKFLSALILLLVTTAAQA) form the signal peptide.

It belongs to the FlgI family. The basal body constitutes a major portion of the flagellar organelle and consists of four rings (L,P,S, and M) mounted on a central rod.

The protein localises to the periplasm. Its subcellular location is the bacterial flagellum basal body. Assembles around the rod to form the L-ring and probably protects the motor/basal body from shearing forces during rotation. This is Flagellar P-ring protein (flgI) from Escherichia coli O157:H7.